The following is a 283-amino-acid chain: MLWDYLILAKPEISSVVTLSAFAGFLIGSPTGLDGGTLLWTMLGTALCAGGVGTLNHVLERRYDAQMKRTAQRPLPAGRADPKMARRVGILLVCLAVGLLCPLVNVLTAVLAALTAVLYLFVYTPLKRTTKWNTLVGTVPGALPALGGYTAATGHLGAGGWATFGILATWQMPHFLSLAWMYRKDYARGDYAMLPVVEPDGNSTAAQMIGFAALLVPVSVLPVLTEAAGWIYGVGVVPLGLWFLWTTIVFHGERTGQKAKRVLKASVLYIPGLVALLLVDWFL.

Transmembrane regions (helical) follow at residues isoleucine 13–leucine 33, glycine 35–leucine 55, isoleucine 90–valine 110, leucine 156–leucine 176, methionine 208–alanine 228, tryptophan 230–phenylalanine 250, and valine 262–phenylalanine 282.

This sequence belongs to the UbiA prenyltransferase family. Protoheme IX farnesyltransferase subfamily.

The protein resides in the cell inner membrane. The enzyme catalyses heme b + (2E,6E)-farnesyl diphosphate + H2O = Fe(II)-heme o + diphosphate. It functions in the pathway porphyrin-containing compound metabolism; heme O biosynthesis; heme O from protoheme: step 1/1. Functionally, converts heme B (protoheme IX) to heme O by substitution of the vinyl group on carbon 2 of heme B porphyrin ring with a hydroxyethyl farnesyl side group. This chain is Protoheme IX farnesyltransferase, found in Salinibacter ruber (strain DSM 13855 / M31).